The sequence spans 560 residues: 5'-nucleotidase (560 aa).

The signal sequence occupies residues 1–21 (MNQRLIIKTALSAAILASLAG). The N-palmitoyl cysteine moiety is linked to residue Cys22. Cys22 carries S-diacylglycerol cysteine lipidation. Residues Asp45, His47, Asp88, Asn120, His221, His256, and Gln258 each coordinate a divalent metal cation. Substrate contacts are provided by residues Phe432 and 501–507 (YNASGGD).

The protein belongs to the 5'-nucleotidase family. Requires chloride as cofactor. It depends on Mg(2+) as a cofactor.

It is found in the cell outer membrane. It carries out the reaction a ribonucleoside 5'-phosphate + H2O = a ribonucleoside + phosphate. Degradation of extracellular 5'-nucleotides for nutritional needs. In Vibrio parahaemolyticus serotype O3:K6 (strain RIMD 2210633), this protein is 5'-nucleotidase (nutA).